A 467-amino-acid chain; its full sequence is NADH-quinone oxidoreductase subunit N 2 (467 aa).

The next 13 helical transmembrane spans lie at 1-21 (MSIF…ALFV), 31-51 (VASW…FALG), 66-86 (LSQF…GIAA), 99-119 (FMLL…VELI), 153-173 (ILFG…IIAA), 195-215 (AVIG…LFPF), 231-253 (AAYV…AAFV), 258-280 (EVTT…AALV), 287-307 (LLGF…AAGS), 315-335 (AFYS…VCAI), 357-377 (LAMI…TAGF), 394-414 (WLVI…LSMV), and 434-454 (LIFG…PAPL).

Belongs to the complex I subunit 2 family. As to quaternary structure, NDH-1 is composed of 14 different subunits. Subunits NuoA, H, J, K, L, M, N constitute the membrane sector of the complex.

The protein resides in the cell inner membrane. It carries out the reaction a quinone + NADH + 5 H(+)(in) = a quinol + NAD(+) + 4 H(+)(out). In terms of biological role, NDH-1 shuttles electrons from NADH, via FMN and iron-sulfur (Fe-S) centers, to quinones in the respiratory chain. The immediate electron acceptor for the enzyme in this species is believed to be ubiquinone. Couples the redox reaction to proton translocation (for every two electrons transferred, four hydrogen ions are translocated across the cytoplasmic membrane), and thus conserves the redox energy in a proton gradient. This Solidesulfovibrio magneticus (strain ATCC 700980 / DSM 13731 / RS-1) (Desulfovibrio magneticus) protein is NADH-quinone oxidoreductase subunit N 2.